A 161-amino-acid polypeptide reads, in one-letter code: Nucleotide-binding protein XAC3671 (161 aa).

Belongs to the YajQ family.

In terms of biological role, nucleotide-binding protein. The protein is Nucleotide-binding protein XAC3671 of Xanthomonas axonopodis pv. citri (strain 306).